The primary structure comprises 831 residues: Multiphosphoryl transfer protein (831 aa).

One can recognise an HPr domain in the interval 1–90; sequence MLTIQFLCPL…EYILVRFIDS (90 aa). His15 acts as the Pros-phosphohistidine intermediate; for HPr activity in catalysis. Position 15 is a phosphohistidine; by EI (His15). Residues 119-650 are PTS EI; the sequence is GNVLASGVGV…AVKSQLRQLD (532 aa). The active-site Tele-phosphohistidine intermediate; for PTS EI activity is the His298. At His298 the chain carries Phosphohistidine; by autocatalysis. Arg405 and Arg441 together coordinate phosphoenolpyruvate. Mg(2+) contacts are provided by Glu540 and Asp564. Phosphoenolpyruvate-binding positions include 563–564 and Arg574; that span reads ND. Catalysis depends on Cys611, which acts as the Proton donor; for EI activity. Positions 685 to 828 constitute a PTS EIIA type-2 domain; the sequence is PLLALENIFV…QSILTLLETE (144 aa). The active-site Tele-phosphohistidine intermediate; for PTS EIIA activity is His747. Residue His747 is modified to Phosphohistidine; by HPr.

Belongs to the PEP-utilizing enzyme family. Requires Mg(2+) as cofactor.

The protein localises to the cytoplasm. It carries out the reaction L-histidyl-[protein] + phosphoenolpyruvate = N(pros)-phospho-L-histidyl-[protein] + pyruvate. It catalyses the reaction D-fructose(out) + N(pros)-phospho-L-histidyl-[protein] = D-fructose 1-phosphate(in) + L-histidyl-[protein]. In terms of biological role, multifunctional protein that includes general (non sugar-specific) and sugar-specific components of the phosphoenolpyruvate-dependent sugar phosphotransferase system (sugar PTS). This major carbohydrate active transport system catalyzes the phosphorylation of incoming sugar substrates concomitantly with their translocation across the cell membrane. The enzyme II FryABC PTS system is involved in fructose transport. The protein is Multiphosphoryl transfer protein (fryA) of Shigella flexneri.